The chain runs to 445 residues: Tubulin beta chain (445 aa).

GTP is bound by residues Gln-11, Glu-69, Ser-138, Gly-142, Thr-143, Gly-144, Asn-204, and Asn-226. Glu-69 serves as a coordination point for Mg(2+).

Belongs to the tubulin family. Dimer of alpha and beta chains. A typical microtubule is a hollow water-filled tube with an outer diameter of 25 nm and an inner diameter of 15 nM. Alpha-beta heterodimers associate head-to-tail to form protofilaments running lengthwise along the microtubule wall with the beta-tubulin subunit facing the microtubule plus end conferring a structural polarity. Microtubules usually have 13 protofilaments but different protofilament numbers can be found in some organisms and specialized cells. It depends on Mg(2+) as a cofactor.

It is found in the cytoplasm. The protein localises to the cytoskeleton. Functionally, tubulin is the major constituent of microtubules, a cylinder consisting of laterally associated linear protofilaments composed of alpha- and beta-tubulin heterodimers. Microtubules grow by the addition of GTP-tubulin dimers to the microtubule end, where a stabilizing cap forms. Below the cap, tubulin dimers are in GDP-bound state, owing to GTPase activity of alpha-tubulin. This is Tubulin beta chain from Coprinopsis cinerea (strain Okayama-7 / 130 / ATCC MYA-4618 / FGSC 9003) (Inky cap fungus).